Reading from the N-terminus, the 89-residue chain is Small ribosomal subunit protein uS15 (89 aa).

The protein belongs to the universal ribosomal protein uS15 family. Part of the 30S ribosomal subunit. Forms a bridge to the 50S subunit in the 70S ribosome, contacting the 23S rRNA.

Functionally, one of the primary rRNA binding proteins, it binds directly to 16S rRNA where it helps nucleate assembly of the platform of the 30S subunit by binding and bridging several RNA helices of the 16S rRNA. Forms an intersubunit bridge (bridge B4) with the 23S rRNA of the 50S subunit in the ribosome. The protein is Small ribosomal subunit protein uS15 of Shewanella halifaxensis (strain HAW-EB4).